Here is a 49-residue protein sequence, read N- to C-terminus: uncharacterized protein (49 aa).

The helical transmembrane segment at 22 to 42 threads the bilayer; the sequence is AIVGISIMIIIAIGIYLIIEY.

The protein resides in the membrane. This is an uncharacterized protein from Methanocaldococcus jannaschii (strain ATCC 43067 / DSM 2661 / JAL-1 / JCM 10045 / NBRC 100440) (Methanococcus jannaschii).